A 311-amino-acid polypeptide reads, in one-letter code: Forkhead box protein I2 (311 aa).

The segment at residues 99–193 is a DNA-binding region (fork-head); that stretch reads RPPYSYSALI…DNGNFRRKRR (95 aa). Disordered stretches follow at residues 188-237 and 263-294; these read FRRK…TTTC and FSLR…QTGA. Positions 219-231 are enriched in low complexity; the sequence is STPQDPQTSPSPS.

It is found in the nucleus. In terms of biological role, possible transcriptional activator. In Mus musculus (Mouse), this protein is Forkhead box protein I2.